A 518-amino-acid chain; its full sequence is Glutamate--cysteine ligase (518 aa).

This sequence belongs to the glutamate--cysteine ligase type 1 family. Type 1 subfamily.

It carries out the reaction L-cysteine + L-glutamate + ATP = gamma-L-glutamyl-L-cysteine + ADP + phosphate + H(+). It participates in sulfur metabolism; glutathione biosynthesis; glutathione from L-cysteine and L-glutamate: step 1/2. The polypeptide is Glutamate--cysteine ligase (Escherichia coli O8 (strain IAI1)).